Reading from the N-terminus, the 664-residue chain is Delta-like protein C (664 aa).

The first 20 residues, 1–20, serve as a signal peptide directing secretion; the sequence is MARVLLTCFFILISSHLGKS. The Extracellular portion of the chain corresponds to 21-511; sequence SGVFELKVLS…VNSPALPAAL (491 aa). The 45-residue stretch at 154–198 folds into the DSL domain; that stretch reads VVCDEFYHGEECSDFCRPRNDTFGHFNCDAAGNRICLPGWKGDYC. Cystine bridges form between cysteine 156/cysteine 165, cysteine 169/cysteine 181, cysteine 189/cysteine 198, cysteine 203/cysteine 214, cysteine 207/cysteine 220, cysteine 222/cysteine 231, cysteine 234/cysteine 245, cysteine 240/cysteine 251, cysteine 253/cysteine 262, cysteine 269/cysteine 281, cysteine 275/cysteine 291, cysteine 293/cysteine 302, cysteine 309/cysteine 320, cysteine 314/cysteine 329, cysteine 331/cysteine 340, cysteine 347/cysteine 358, cysteine 352/cysteine 368, cysteine 370/cysteine 379, cysteine 386/cysteine 397, cysteine 391/cysteine 406, cysteine 408/cysteine 417, cysteine 424/cysteine 435, cysteine 429/cysteine 444, cysteine 446/cysteine 455, cysteine 462/cysteine 473, cysteine 467/cysteine 482, and cysteine 484/cysteine 493. The N-linked (GlcNAc...) asparagine glycan is linked to asparagine 173. 3 EGF-like domains span residues 199–232, 233–263, and 265–303; these read TEPI…PLCD, ECTR…LFCN, and DLNF…KNCE. An EGF-like 4; calcium-binding domain is found at 305 to 341; it reads ETNECDSNPCKNGGSCNDQENDYTCTCPQGFYGKNCE. EGF-like domains are found at residues 343–380 and 382–418; these read SAMT…SNCE and KIDR…SRCE. The 37-residue stretch at 420–456 folds into the EGF-like 7; calcium-binding domain; the sequence is NIDDCSSNPCQNAGTCVDGINGYTCTCTLGFSGKDCR. Residues 458–494 form the EGF-like 8 domain; sequence RSDACSFMPCQNGGTCYTHFSGPVCQCPAGFMGTQCE. Residues 512-532 form a helical membrane-spanning segment; the sequence is IVSFTLGLITLTLVICAAIVV. Topologically, residues 533-664 are cytoplasmic; sequence LRQMRQNHKA…IEQRVFATEV (132 aa).

Post-translationally, ubiquitinated by mib, leading to its endocytosis and subsequent degradation. In terms of tissue distribution, strongly expressed in the early retina, where it precedes other delta proteins. Also expressed in cranial ganglia, in sensory epithelia including ear and lateral line and in scattered epidermal cells. In the mesoderm, expression is visible by 50% epiboly; it is expressed subsequently in the tail bud, in stripes in the presomitic mesoderm and in the posterior half of each somite. Also expressed in notochord, blood vessels and pronephros. In contrast to other delta proteins, it is not expressed in the majority of nascent primary neurons. In somites, it marks the posterior part of each formed somite, while deltaD (dld) marks the anterior part.

It localises to the membrane. Its function is as follows. Acts as a ligand for Notch receptors and is involved in somitogenesis. Can activate Notch receptors. Required in somite segmentation to keep the oscillations of neighboring presomitic mesoderm cells synchronized. The protein is Delta-like protein C (dlc) of Danio rerio (Zebrafish).